The chain runs to 58 residues: Photosystem II reaction center protein K (58 aa).

Residues 1–21 constitute a propeptide that is removed on maturation; the sequence is MFNAYLDTVLDLSANGTVILA. Residues 29 to 49 form a helical membrane-spanning segment; sequence IFDPIVDVMPIIPVFFLLLAF.

Belongs to the PsbK family. In terms of assembly, PSII is composed of 1 copy each of membrane proteins PsbA, PsbB, PsbC, PsbD, PsbE, PsbF, PsbH, PsbI, PsbJ, PsbK, PsbL, PsbM, PsbT, PsbX, PsbY, PsbZ, Psb30/Ycf12, at least 3 peripheral proteins of the oxygen-evolving complex and a large number of cofactors. It forms dimeric complexes.

The protein localises to the plastid. The protein resides in the chloroplast thylakoid membrane. Functionally, one of the components of the core complex of photosystem II (PSII). PSII is a light-driven water:plastoquinone oxidoreductase that uses light energy to abstract electrons from H(2)O, generating O(2) and a proton gradient subsequently used for ATP formation. It consists of a core antenna complex that captures photons, and an electron transfer chain that converts photonic excitation into a charge separation. This is Photosystem II reaction center protein K from Staurastrum punctulatum (Green alga).